Consider the following 282-residue polypeptide: Phosphate import ATP-binding protein PstB (282 aa).

A compositionally biased stretch (basic and acidic residues) spans 1 to 10 (MNMAESHLDP). The segment at 1 to 24 (MNMAESHLDPSKLATGPAGAGAAT) is disordered. Residues 14–24 (ATGPAGAGAAT) show a composition bias toward low complexity. Residues 36-277 (IEVKNLNFFY…PARKETEDYI (242 aa)) form the ABC transporter domain. 68–75 (GPSGCGKS) provides a ligand contact to ATP.

It belongs to the ABC transporter superfamily. Phosphate importer (TC 3.A.1.7) family. In terms of assembly, the complex is composed of two ATP-binding proteins (PstB), two transmembrane proteins (PstC and PstA) and a solute-binding protein (PstS).

It localises to the cell inner membrane. The enzyme catalyses phosphate(out) + ATP + H2O = ADP + 2 phosphate(in) + H(+). Its function is as follows. Part of the ABC transporter complex PstSACB involved in phosphate import. Responsible for energy coupling to the transport system. In Burkholderia thailandensis (strain ATCC 700388 / DSM 13276 / CCUG 48851 / CIP 106301 / E264), this protein is Phosphate import ATP-binding protein PstB.